A 420-amino-acid chain; its full sequence is MVNEYKRIVLLTGLMGINDHDFRMVKSLLSKELKLNRMQDQYDRVKIADLMEDKFPKDAGVDQLIKLYKQIPGLGDIANKLKNEKAKAKRTRTGKRKTAAKRQRQEEPSTSQPMSTTNEDAEPESGRSTPDTQVAQLSLPTASRRNQAIQISPTIASSSGQTSSRSSETLQSIIQSPKTPKRPSSSILDPPVSSGTASSSAQALGVPLATIAKRQRLKNVPKEPSEENGHQQGSKKVMVLKVTEPFSYDVTEEKMFHATVATETEFFRVKVFDIVLKEKFIPNKVLTISNYVGCNGFINIYSASSVSEVNDGEPMNIPLSLRKSANRTPKINYLCSKKRGIFVNGVFTVCKKEEKWNYICYEIGDDTGMMEVEVYGRLTNIACNPGDKLRLICFKLIPDEEKAQLRSTTHSNMQVIKAKN.

Positions 1–87 constitute a Pyrin domain; sequence MVNEYKRIVL…ANKLKNEKAK (87 aa). Disordered regions lie at residues 82–201 and 216–236; these read KNEK…SSSA and RLKN…GSKK. Residues 87 to 102 are compositionally biased toward basic residues; sequence KAKRTRTGKRKTAAKR. 2 stretches are compositionally biased toward polar residues: residues 108-118 and 126-151; these read PSTSQPMSTTN and GRST…AIQI. Over residues 152-169 the composition is skewed to low complexity; sequence SPTIASSSGQTSSRSSET. Over residues 170 to 201 the composition is skewed to polar residues; sequence LQSIIQSPKTPKRPSSSILDPPVSSGTASSSA. The 198-residue stretch at 219-416 folds into the HIN-200 domain; the sequence is NVPKEPSEEN…STTHSNMQVI (198 aa). Over residues 220-229 the composition is skewed to basic and acidic residues; the sequence is VPKEPSEENG.

The protein belongs to the HIN-200 family.

It localises to the nucleus. The chain is Pyrin and HIN domain-containing protein 1 from Mus musculus (Mouse).